The primary structure comprises 90 residues: Putative Fis-like DNA-binding protein (90 aa).

Positions 66–85 form a DNA-binding region, H-T-H motif; it reads QSRAAALLGIHRATLRKKLK.

The protein belongs to the transcriptional regulatory Fis family.

The sequence is that of Putative Fis-like DNA-binding protein from Xylella fastidiosa (strain 9a5c).